The chain runs to 455 residues: 3-phosphoshikimate 1-carboxyvinyltransferase (455 aa).

Residues 1 to 23 (MSHGSNPRPATARKSSDLKGTLR) form a disordered region. The 3-phosphoshikimate site is built by lysine 28, serine 29, and arginine 33. Lysine 28 provides a ligand contact to phosphoenolpyruvate. 2 residues coordinate phosphoenolpyruvate: glycine 100 and arginine 128. Positions 173, 175, 326, and 353 each coordinate 3-phosphoshikimate. Residue glutamine 175 participates in phosphoenolpyruvate binding. Catalysis depends on aspartate 326, which acts as the Proton acceptor. Residues arginine 357 and arginine 405 each coordinate phosphoenolpyruvate.

It belongs to the EPSP synthase family. As to quaternary structure, monomer.

Its subcellular location is the cytoplasm. It carries out the reaction 3-phosphoshikimate + phosphoenolpyruvate = 5-O-(1-carboxyvinyl)-3-phosphoshikimate + phosphate. Its pathway is metabolic intermediate biosynthesis; chorismate biosynthesis; chorismate from D-erythrose 4-phosphate and phosphoenolpyruvate: step 6/7. Functionally, catalyzes the transfer of the enolpyruvyl moiety of phosphoenolpyruvate (PEP) to the 5-hydroxyl of shikimate-3-phosphate (S3P) to produce enolpyruvyl shikimate-3-phosphate and inorganic phosphate. This chain is 3-phosphoshikimate 1-carboxyvinyltransferase, found in Rhizobium meliloti (strain 1021) (Ensifer meliloti).